Here is a 137-residue protein sequence, read N- to C-terminus: Protein Turandot X (137 aa).

The N-terminal stretch at 1–24 is a signal peptide; sequence MKVPVFQLSCLLCLIVCLLCSVKA.

This sequence belongs to the Turandot family.

The protein localises to the secreted. A humoral factor that may play a role in stress tolerance. This Drosophila persimilis (Fruit fly) protein is Protein Turandot X.